A 468-amino-acid chain; its full sequence is H(+)/Cl(-) exchange transporter ClcA (468 aa).

Residues 1–30 (MSTRETFKISLLAKMPKDVINQFLSKDKTP) are Cytoplasmic-facing. A helical transmembrane segment spans residues 31–67 (FSVLFLSLLVGILAGLVGTYFEQAVHLVSETRTDWLK). Topologically, residues 68 to 74 (SEIGSFL) are periplasmic. Residues 75–98 (PLWLAAFLISAFLAFIGYFLVHRF) traverse the membrane as a helical segment. Positions 104 to 108 (GSGIP) match the Selectivity filter part_1 motif. S105 lines the chloride pocket. The segment at residues 107–114 (IPEIEGAM) is an intramembrane region (helical). The Cytoplasmic segment spans residues 115-121 (DGMRPVR). The next 2 helical transmembrane spans lie at 122–139 (WWRV…ALGS) and 146–164 (EGPT…SDIF). Positions 144–148 (GREGP) match the Selectivity filter part_2 motif. The Cytoplasmic portion of the chain corresponds to 165-174 (RVKNEDTRHS). 2 intramembrane regions (helical) span residues 175–187 (LLAA…LAAA) and 191–199 (PLAGIMFVI). Topologically, residues 200–212 (EEMRPQFRYTLIS) are cytoplasmic. Residues 213 to 230 (VRAVIISAVAANIVFRVI) form a helical membrane-spanning segment. Residues 231 to 250 (NGQDAVITMPQYDAPELSTL) lie on the Periplasmic side of the membrane. A helical membrane pass occupies residues 251 to 279 (GLFLLLGALFGVFGVLFNYLITLAQDLFV). Residues 280 to 285 (KFHRND) lie on the Cytoplasmic side of the membrane. A helical membrane pass occupies residues 286 to 307 (RKRYLLTGSMIGGCFGLLLLYV). At 308 to 327 (PELTGGGISLIPTITNGGYG) the chain is on the periplasmic side. Helical transmembrane passes span 328-347 (AGIL…LCFG) and 353-374 (GIFA…LIAK). The short motif at 353 to 357 (GIFAP) is the Selectivity filter part_3 element. 2 residues coordinate chloride: I354 and F355. The Periplasmic segment spans residues 375 to 384 (VWFPELNIEP). Positions 385-399 (GMFAIAGMGALFAAT) form an intramembrane region, helical. Residues 400–402 (VRA) constitute an intramembrane region (note=Loop between two helices). The helical intramembrane region spans 403–414 (PITGILLVIEMT). The note=Loop between two helices intramembrane region spans 415–419 (NNYHL). The helical transmembrane segment at 420–436 (ILPLIITSLGAVIFAQL) threads the bilayer. The Cytoplasmic portion of the chain corresponds to 437–468 (LGGQPIYSQLLHRTLKNQKLQQQDLPPQSPNS). Position 443 (Y443) interacts with chloride.

This sequence belongs to the chloride channel (TC 2.A.49) family. ClcA subfamily. As to quaternary structure, homodimer.

The protein localises to the cell inner membrane. It carries out the reaction 2 chloride(in) + H(+)(out) = 2 chloride(out) + H(+)(in). Functionally, proton-coupled chloride transporter. Functions as antiport system and exchanges two chloride ions for 1 proton. Probably acts as an electrical shunt for an outwardly-directed proton pump that is linked to amino acid decarboxylation, as part of the extreme acid resistance (XAR) response. The protein is H(+)/Cl(-) exchange transporter ClcA of Vibrio cholerae serotype O1 (strain ATCC 39541 / Classical Ogawa 395 / O395).